A 588-amino-acid chain; its full sequence is Pleckstrin homology domain-containing family A member 4 (588 aa).

The region spanning 54–153 is the PH domain; that stretch reads PVHIRGWLHK…WLRALGRASR (100 aa). Disordered stretches follow at residues 155 to 349 and 495 to 588; these read EGED…QASM and AGLG…VDHL. Ser164 is subject to Phosphoserine. Basic and acidic residues predominate over residues 183–193; it reads VNRREEGRISE. The segment covering 211–222 has biased composition (polar residues); the sequence is TPNSTVDLQTDT. Composition is skewed to low complexity over residues 246 to 260 and 321 to 334; these read PRPR…PLSA and QRTQ…GSST. Ser562 is modified (phosphoserine).

The protein resides in the cytoplasm. Its subcellular location is the membrane. In terms of biological role, binds specifically to phosphatidylinositol 3-phosphate (PtdIns3P), but not to other phosphoinositides. The polypeptide is Pleckstrin homology domain-containing family A member 4 (Plekha4) (Mus musculus (Mouse)).